Here is a 126-residue protein sequence, read N- to C-terminus: Probable prefoldin subunit 4 (126 aa).

It belongs to the prefoldin subunit beta family. As to quaternary structure, heterohexamer of two PFD-alpha type and four PFD-beta type subunits.

Binds specifically to cytosolic chaperonin (c-CPN) and transfers target proteins to it. Binds to nascent polypeptide chain and promotes folding in an environment in which there are many competing pathways for nonnative proteins. This Caenorhabditis elegans protein is Probable prefoldin subunit 4 (pfd-4).